We begin with the raw amino-acid sequence, 217 residues long: Small ribosomal subunit protein uS3 (217 aa).

In terms of domain architecture, KH type-2 spans 40-110 (IRELVNKSFT…EVYINIHEVR (71 aa)).

The protein belongs to the universal ribosomal protein uS3 family. Part of the 30S ribosomal subunit. Forms a tight complex with proteins S10 and S14.

In terms of biological role, binds the lower part of the 30S subunit head. Binds mRNA in the 70S ribosome, positioning it for translation. This Rickettsia bellii (strain OSU 85-389) protein is Small ribosomal subunit protein uS3.